Reading from the N-terminus, the 239-residue chain is Ribonuclease PH (239 aa).

Residues R86 and 124–126 contribute to the phosphate site; that span reads GTR.

This sequence belongs to the RNase PH family. As to quaternary structure, homohexameric ring arranged as a trimer of dimers.

It catalyses the reaction tRNA(n+1) + phosphate = tRNA(n) + a ribonucleoside 5'-diphosphate. Phosphorolytic 3'-5' exoribonuclease that plays an important role in tRNA 3'-end maturation. Removes nucleotide residues following the 3'-CCA terminus of tRNAs; can also add nucleotides to the ends of RNA molecules by using nucleoside diphosphates as substrates, but this may not be physiologically important. Probably plays a role in initiation of 16S rRNA degradation (leading to ribosome degradation) during starvation. In Sodalis glossinidius (strain morsitans), this protein is Ribonuclease PH.